The sequence spans 160 residues: MRLTVIAIGKLKQGPERELAERYRGRFDDLGRKLGFRGLDIHEIAESRARDAAGRMAEEAAAIAALIAEGSSLVTLDERGKSVDSAAFAAQLGRWRDESVPGTIFVIGGADGLLPELRRKAKLCLSFGAATWPHQMVRVMLLEQIYRAATILAGHPYHRA.

Residues Leu76 and Gly108 each coordinate S-adenosyl-L-methionine.

The protein belongs to the RNA methyltransferase RlmH family. As to quaternary structure, homodimer.

The protein resides in the cytoplasm. The enzyme catalyses pseudouridine(1915) in 23S rRNA + S-adenosyl-L-methionine = N(3)-methylpseudouridine(1915) in 23S rRNA + S-adenosyl-L-homocysteine + H(+). Specifically methylates the pseudouridine at position 1915 (m3Psi1915) in 23S rRNA. The protein is Ribosomal RNA large subunit methyltransferase H of Rhodopseudomonas palustris (strain BisB5).